A 182-amino-acid chain; its full sequence is MSKQLKPVAPKQPIVLGKMGSTYGIRGWLRVFSSTENAESIFDYQPWLIQRSGQWQFVELEDWKRHSQDLIIKVKGIDDRDAANLLTNCEIVVDSEQLPPLEGDDYYWKDLMGCQVVTTSGYELGKVIDMMETGSNDVMVVRANLKDAFGMKERLVPFLHGQVIKKVDLTARVIEADWDPGF.

Positions 103–182 (GDDYYWKDLM…VIEADWDPGF (80 aa)) constitute a PRC barrel domain.

The protein belongs to the RimM family. As to quaternary structure, binds ribosomal protein uS19.

It localises to the cytoplasm. In terms of biological role, an accessory protein needed during the final step in the assembly of 30S ribosomal subunit, possibly for assembly of the head region. Essential for efficient processing of 16S rRNA. May be needed both before and after RbfA during the maturation of 16S rRNA. It has affinity for free ribosomal 30S subunits but not for 70S ribosomes. The polypeptide is Ribosome maturation factor RimM (Serratia proteamaculans (strain 568)).